Reading from the N-terminus, the 290-residue chain is Tubulin beta-4B chain (290 aa).

The short motif at 1–4 is the MREI motif element; it reads MREI. Glutamine 11 is a binding site for GTP. Threonine 55 carries the phosphothreonine modification. The residue at position 58 (lysine 58) is an N6-acetyllysine. Residues glutamate 69, serine 138, glycine 142, threonine 143, glycine 144, and asparagine 172 each contribute to the GTP site. Glutamate 69 lines the Mg(2+) pocket.

The protein belongs to the tubulin family. Dimer of alpha and beta chains. A typical microtubule is a hollow water-filled tube with an outer diameter of 25 nm and an inner diameter of 15 nM. Alpha-beta heterodimers associate head-to-tail to form protofilaments running lengthwise along the microtubule wall with the beta-tubulin subunit facing the microtubule plus end conferring a structural polarity. Microtubules usually have 13 protofilaments but different protofilament numbers can be found in some organisms and specialized cells. Component of sperm flagellar doublet microtubules. Mg(2+) is required as a cofactor. Post-translationally, some glutamate residues at the C-terminus are polyglycylated, resulting in polyglycine chains on the gamma-carboxyl group. Glycylation is mainly limited to tubulin incorporated into axonemes (cilia and flagella) whereas glutamylation is prevalent in neuronal cells, centrioles, axonemes, and the mitotic spindle. Both modifications can coexist on the same protein on adjacent residues, and lowering polyglycylation levels increases polyglutamylation, and reciprocally. Cilia and flagella glycylation is required for their stability and maintenance. Flagella glycylation controls sperm motility. In terms of processing, some glutamate residues at the C-terminus are polyglutamylated, resulting in polyglutamate chains on the gamma-carboxyl group. Polyglutamylation plays a key role in microtubule severing by spastin (SPAST). SPAST preferentially recognizes and acts on microtubules decorated with short polyglutamate tails: severing activity by SPAST increases as the number of glutamates per tubulin rises from one to eight, but decreases beyond this glutamylation threshold. Glutamylation is also involved in cilia motility.

It is found in the cytoplasm. The protein localises to the cytoskeleton. The protein resides in the flagellum axoneme. Its function is as follows. Tubulin is the major constituent of microtubules, a cylinder consisting of laterally associated linear protofilaments composed of alpha- and beta-tubulin heterodimers. Microtubules grow by the addition of GTP-tubulin dimers to the microtubule end, where a stabilizing cap forms. Below the cap, tubulin dimers are in GDP-bound state, owing to GTPase activity of alpha-tubulin. The polypeptide is Tubulin beta-4B chain (TUBB4B) (Mesocricetus auratus (Golden hamster)).